The sequence spans 632 residues: Threonine--tRNA ligase (632 aa).

One can recognise a TGS domain in the interval 1–61 (MPIVTLPDGS…EHDAEVSILT (61 aa)). The interval 242–533 (DHRKLARKLD…LIEHYAGSMP (292 aa)) is catalytic. Zn(2+) contacts are provided by Cys-333, His-384, and His-510.

The protein belongs to the class-II aminoacyl-tRNA synthetase family. Homodimer. The cofactor is Zn(2+).

It is found in the cytoplasm. It carries out the reaction tRNA(Thr) + L-threonine + ATP = L-threonyl-tRNA(Thr) + AMP + diphosphate + H(+). Catalyzes the attachment of threonine to tRNA(Thr) in a two-step reaction: L-threonine is first activated by ATP to form Thr-AMP and then transferred to the acceptor end of tRNA(Thr). Also edits incorrectly charged L-seryl-tRNA(Thr). This Chromohalobacter salexigens (strain ATCC BAA-138 / DSM 3043 / CIP 106854 / NCIMB 13768 / 1H11) protein is Threonine--tRNA ligase.